We begin with the raw amino-acid sequence, 148 residues long: Ubiquitin-conjugating enzyme E2 30 (148 aa).

The UBC core domain occupies 1 to 147 (MASKRINKEL…AQSWTQKYAM (147 aa)). The active-site Glycyl thioester intermediate is the Cys-85.

The protein belongs to the ubiquitin-conjugating enzyme family. In terms of assembly, interacts with RGLG3 and RGLG4. As to expression, ubiquitously expressed at very low levels.

It catalyses the reaction S-ubiquitinyl-[E1 ubiquitin-activating enzyme]-L-cysteine + [E2 ubiquitin-conjugating enzyme]-L-cysteine = [E1 ubiquitin-activating enzyme]-L-cysteine + S-ubiquitinyl-[E2 ubiquitin-conjugating enzyme]-L-cysteine.. The protein operates within protein modification; protein ubiquitination. Functionally, accepts the ubiquitin from the E1 complex and catalyzes its covalent attachment to other proteins. The chain is Ubiquitin-conjugating enzyme E2 30 (UBC30) from Arabidopsis thaliana (Mouse-ear cress).